A 428-amino-acid polypeptide reads, in one-letter code: Kynureninase (428 aa).

Residues T104, T105, 132 to 135 (FPSD), D213, H216, and Y238 contribute to the pyridoxal 5'-phosphate site. K239 is subject to N6-(pyridoxal phosphate)lysine. Positions 267 and 295 each coordinate pyridoxal 5'-phosphate.

It belongs to the kynureninase family. In terms of assembly, homodimer. Requires pyridoxal 5'-phosphate as cofactor.

The enzyme catalyses L-kynurenine + H2O = anthranilate + L-alanine + H(+). It carries out the reaction 3-hydroxy-L-kynurenine + H2O = 3-hydroxyanthranilate + L-alanine + H(+). It functions in the pathway amino-acid degradation; L-kynurenine degradation; L-alanine and anthranilate from L-kynurenine: step 1/1. It participates in cofactor biosynthesis; NAD(+) biosynthesis; quinolinate from L-kynurenine: step 2/3. In terms of biological role, catalyzes the cleavage of L-kynurenine (L-Kyn) and L-3-hydroxykynurenine (L-3OHKyn) into anthranilic acid (AA) and 3-hydroxyanthranilic acid (3-OHAA), respectively. The chain is Kynureninase from Bacillus cereus (strain ATCC 14579 / DSM 31 / CCUG 7414 / JCM 2152 / NBRC 15305 / NCIMB 9373 / NCTC 2599 / NRRL B-3711).